Reading from the N-terminus, the 563-residue chain is Arginine--tRNA ligase (563 aa).

Residues 121-131 carry the 'HIGH' region motif; the sequence is PNIAKPFSIGH.

It belongs to the class-I aminoacyl-tRNA synthetase family. As to quaternary structure, monomer.

Its subcellular location is the cytoplasm. The catalysed reaction is tRNA(Arg) + L-arginine + ATP = L-arginyl-tRNA(Arg) + AMP + diphosphate. The sequence is that of Arginine--tRNA ligase (argS) from Streptococcus pneumoniae serotype 4 (strain ATCC BAA-334 / TIGR4).